The following is a 402-amino-acid chain: Nicotinate phosphoribosyltransferase (402 aa).

The residue at position 226 (His226) is a Phosphohistidine; by autocatalysis.

It belongs to the NAPRTase family. Transiently phosphorylated on a His residue during the reaction cycle. Phosphorylation strongly increases the affinity for substrates and increases the rate of nicotinate D-ribonucleotide production. Dephosphorylation regenerates the low-affinity form of the enzyme, leading to product release.

It catalyses the reaction nicotinate + 5-phospho-alpha-D-ribose 1-diphosphate + ATP + H2O = nicotinate beta-D-ribonucleotide + ADP + phosphate + diphosphate. Its pathway is cofactor biosynthesis; NAD(+) biosynthesis; nicotinate D-ribonucleotide from nicotinate: step 1/1. In terms of biological role, catalyzes the synthesis of beta-nicotinate D-ribonucleotide from nicotinate and 5-phospho-D-ribose 1-phosphate at the expense of ATP. This chain is Nicotinate phosphoribosyltransferase, found in Chromobacterium violaceum (strain ATCC 12472 / DSM 30191 / JCM 1249 / CCUG 213 / NBRC 12614 / NCIMB 9131 / NCTC 9757 / MK).